Consider the following 160-residue polypeptide: Transcription elongation factor GreA (160 aa).

Positions 49-75 (SEYDEAKNDQAFTEGKILQLENKLKNA) form a coiled coil.

Belongs to the GreA/GreB family.

Functionally, necessary for efficient RNA polymerase transcription elongation past template-encoded arresting sites. The arresting sites in DNA have the property of trapping a certain fraction of elongating RNA polymerases that pass through, resulting in locked ternary complexes. Cleavage of the nascent transcript by cleavage factors such as GreA or GreB allows the resumption of elongation from the new 3'terminus. GreA releases sequences of 2 to 3 nucleotides. The protein is Transcription elongation factor GreA of Clostridium botulinum (strain Alaska E43 / Type E3).